The sequence spans 631 residues: Leukocyte immunoglobulin-like receptor subfamily B member 3 (631 aa).

A signal peptide spans 1–23 (MTPALTALLCLGLSLGPRTRVQA). Over 24–443 (GPFPKPTLWA…STPGLGRYLE (420 aa)) the chain is Extracellular. Ig-like C2-type domains lie at 42–100 (GSPV…RCHY), 111–229 (DPLE…SLLT), 225–314 (PSLL…DPLN), and 338–419 (GENV…LVVS). Cysteine 49 and cysteine 98 are joined by a disulfide. The span at 59–70 (RLHKEGSPEPLD) shows a compositional bias: basic and acidic residues. The segment at 59 to 78 (RLHKEGSPEPLDRNNPLEPK) is disordered. Asparagine 139 carries an N-linked (GlcNAc...) asparagine glycan. 2 disulfides stabilise this stretch: cysteine 144/cysteine 196 and cysteine 245/cysteine 296. N-linked (GlcNAc...) asparagine glycans are attached at residues asparagine 280, asparagine 301, and asparagine 340. Residues cysteine 345 and cysteine 396 are joined by a disulfide bond. A helical membrane pass occupies residues 444–464 (VLIGVSVAFVLLLFLLLFLLL). The Cytoplasmic segment spans residues 465–631 (RRQRHSKHRT…PSIYATLAIH (167 aa)). The disordered stretch occupies residues 470–631 (SKHRTSDQRK…PSIYATLAIH (162 aa)). Basic and acidic residues predominate over residues 473-482 (RTSDQRKTDF). An ITIM motif 1 motif is present at residues 512-517 (NLYAAV). Basic and acidic residues-rich tracts occupy residues 520–537 (TQSEDRVELDSQSPHDED) and 567–581 (LDTKDRQVEEDRQMD). A compositionally biased stretch (polar residues) spans 588 to 600 (EASQDVTYAQLHS). Short sequence motifs (ITIM motif) lie at residues 593 to 598 (VTYAQL) and 623 to 628 (SIYATL). Tyrosine 595 and tyrosine 625 each carry phosphotyrosine; by LYN.

Interacts with LYN, PTPN6/SHP-1 and PTPN11/SHP-2. In terms of processing, phosphorylated on tyrosine residues by LYN. Phosphorylation at Tyr-595 and Tyr-625 is important for interaction with PTPN6/SHP-1 and PTPN11/SHP-2. Detected in monocytes and B-cells.

The protein resides in the cell membrane. May act as receptor for class I MHC antigens. Becomes activated upon coligation of LILRB3 and immune receptors, such as FCGR2B and the B-cell receptor. Down-regulates antigen-induced B-cell activation by recruiting phosphatases to its immunoreceptor tyrosine-based inhibitor motifs (ITIM). The sequence is that of Leukocyte immunoglobulin-like receptor subfamily B member 3 (LILRB3) from Homo sapiens (Human).